Consider the following 55-residue polypeptide: AYKITDECIACGSCADQCPVEAISEGSIYEIDEALCTDCGACADQCPVEAIVPED.

2 4Fe-4S ferredoxin-type domains span residues 2–26 (YKIT…ISEG) and 27–55 (SIYE…VPED). [4Fe-4S] cluster is bound by residues C8, C11, C14, C18, C36, C39, C42, and C46.

It depends on [4Fe-4S] cluster as a cofactor.

In terms of biological role, ferredoxins are iron-sulfur proteins that transfer electrons in a wide variety of metabolic reactions. In Butyribacterium methylotrophicum, this protein is Ferredoxin.